Consider the following 196-residue polypeptide: Protein GrpE (196 aa).

A disordered region spans residues 1–40 (MSSKEQKTPEGQAPEEIIMDQHEEVEAVEPNDSAEQVDPR).

This sequence belongs to the GrpE family. As to quaternary structure, homodimer.

It is found in the cytoplasm. Functionally, participates actively in the response to hyperosmotic and heat shock by preventing the aggregation of stress-denatured proteins, in association with DnaK and GrpE. It is the nucleotide exchange factor for DnaK and may function as a thermosensor. Unfolded proteins bind initially to DnaJ; upon interaction with the DnaJ-bound protein, DnaK hydrolyzes its bound ATP, resulting in the formation of a stable complex. GrpE releases ADP from DnaK; ATP binding to DnaK triggers the release of the substrate protein, thus completing the reaction cycle. Several rounds of ATP-dependent interactions between DnaJ, DnaK and GrpE are required for fully efficient folding. The polypeptide is Protein GrpE (Salmonella gallinarum (strain 287/91 / NCTC 13346)).